The following is a 425-amino-acid chain: Histone-binding protein RBBP4-A (425 aa).

Alanine 2 carries the post-translational modification N-acetylalanine. WD repeat units lie at residues 32–125 (YDLV…THDG), 126–175 (EVNR…RLRG), 176–223 (HQKE…KTIF), 225–270 (GHTA…HSVD), 271–314 (AHTA…HSFE), 315–371 (SHKD…FIHG), and 372–404 (GHTA…VWQM).

It belongs to the WD repeat RBAP46/RBAP48/MSI1 family. In terms of assembly, binds directly to histone H4, probably via helix 1 of the histone fold, a region that is not accessible when histone H4 is in chromatin. Probably forms a large corepressor complex that contains ncor1, sin3a, hdac1-A and/or hdac1-B, hdac2, rbbp4-A and/or rbbp4-B and possibly rbbp7.

It localises to the nucleus. Its subcellular location is the chromosome. The protein resides in the telomere. In terms of biological role, core histone-binding subunit that may target chromatin assembly factors, chromatin remodeling factors and histone deacetylases to their histone substrates in a manner that is regulated by nucleosomal DNA. Component of several complexes which regulate chromatin metabolism. In Xenopus laevis (African clawed frog), this protein is Histone-binding protein RBBP4-A (rbbp4-a).